The primary structure comprises 338 residues: tRNA N6-adenosine threonylcarbamoyltransferase (338 aa).

The Fe cation site is built by H114 and H118. Residues 136–140, D169, G182, D186, and N275 each bind substrate; that span reads LVSGG. Residue D301 participates in Fe cation binding.

The protein belongs to the KAE1 / TsaD family. The cofactor is Fe(2+).

The protein localises to the cytoplasm. The catalysed reaction is L-threonylcarbamoyladenylate + adenosine(37) in tRNA = N(6)-L-threonylcarbamoyladenosine(37) in tRNA + AMP + H(+). Functionally, required for the formation of a threonylcarbamoyl group on adenosine at position 37 (t(6)A37) in tRNAs that read codons beginning with adenine. Is involved in the transfer of the threonylcarbamoyl moiety of threonylcarbamoyl-AMP (TC-AMP) to the N6 group of A37, together with TsaE and TsaB. TsaD likely plays a direct catalytic role in this reaction. The chain is tRNA N6-adenosine threonylcarbamoyltransferase from Streptococcus equi subsp. equi (strain 4047).